The sequence spans 149 residues: Putative mediator of RNA polymerase II transcription subunit 22 (149 aa).

It belongs to the Mediator complex subunit 22 family. Component of the Mediator complex.

The protein localises to the nucleus. Its function is as follows. Component of the Mediator complex, a coactivator involved in the regulated transcription of nearly all RNA polymerase II-dependent genes. Mediator functions as a bridge to convey information from gene-specific regulatory proteins to the basal RNA polymerase II transcription machinery. Mediator is recruited to promoters by direct interactions with regulatory proteins and serves as a scaffold for the assembly of a functional preinitiation complex with RNA polymerase II and the general transcription factors. The protein is Putative mediator of RNA polymerase II transcription subunit 22 (med22) of Dictyostelium discoideum (Social amoeba).